We begin with the raw amino-acid sequence, 450 residues long: Plasminogen-binding protein PgbA (450 aa).

3 stretches are compositionally biased toward basic and acidic residues: residues 262–273 (EIKQEAIKEPKK), 284–310 (LEEK…DERK), and 317–362 (KAME…REIN). A disordered region spans residues 262 to 450 (EIKQEAIKEP…RRKALEMNKK (189 aa)). The span at 363 to 386 (QESANEPSSENNATLKDTENTSVL) shows a compositional bias: polar residues. Residues 389-450 (SAAKKEAPKP…RRKALEMNKK (62 aa)) are compositionally biased toward basic and acidic residues.

The protein resides in the cell surface. Functionally, binds plasminogen, specifically, and in a concentration and lysine-dependent manner. Plasminogen is the precursor of plasmin, a serine protease that cleaves fibrin, fibronectin, laminin and vitronectin. Acquisition of plasminogen/plasmin could enable H.pylori to degrade host components. The sequence is that of Plasminogen-binding protein PgbA (pgbA) from Helicobacter pylori (strain J99 / ATCC 700824) (Campylobacter pylori J99).